Reading from the N-terminus, the 274-residue chain is 2,3,4,5-tetrahydropyridine-2,6-dicarboxylate N-succinyltransferase (274 aa).

Residues Arg-106 and Asp-143 each contribute to the substrate site.

Belongs to the transferase hexapeptide repeat family. In terms of assembly, homotrimer.

The protein resides in the cytoplasm. It catalyses the reaction (S)-2,3,4,5-tetrahydrodipicolinate + succinyl-CoA + H2O = (S)-2-succinylamino-6-oxoheptanedioate + CoA. The protein operates within amino-acid biosynthesis; L-lysine biosynthesis via DAP pathway; LL-2,6-diaminopimelate from (S)-tetrahydrodipicolinate (succinylase route): step 1/3. This is 2,3,4,5-tetrahydropyridine-2,6-dicarboxylate N-succinyltransferase from Acidovorax ebreus (strain TPSY) (Diaphorobacter sp. (strain TPSY)).